The primary structure comprises 411 residues: Dual specificity protein phosphatase Mpk3 (411 aa).

The Rhodanese domain maps to 22–149 (DSKDLILLDC…FRQAFPEWCE (128 aa)). Residues 184-197 (DSACSSSAESSDCE) are compositionally biased toward low complexity. A disordered region spans residues 184–209 (DSACSSSAESSDCESSSHHHHHHSHH). Residues 214-358 (APVEIIPGLL…LLSFESQLRL (145 aa)) form the Tyrosine-protein phosphatase domain. The active-site Phosphocysteine intermediate is the Cys302.

Belongs to the protein-tyrosine phosphatase family. Non-receptor class dual specificity subfamily. Interacts (via N-terminal region) with phosphorylated rl. As to expression, ubiquitous expression in eye and wing imaginal disks. Enriched in ovary.

It localises to the cytoplasm. The enzyme catalyses O-phospho-L-tyrosyl-[protein] + H2O = L-tyrosyl-[protein] + phosphate. It catalyses the reaction O-phospho-L-seryl-[protein] + H2O = L-seryl-[protein] + phosphate. The catalysed reaction is O-phospho-L-threonyl-[protein] + H2O = L-threonyl-[protein] + phosphate. Its activity is regulated as follows. Activity abolished by tyrosine phosphatase inhibitor sodium vanadate. Activated by rl. Its function is as follows. Negatively regulates the activity of members of the MAP kinase family in response to changes in the cellular environment. Has a specificity for the ERK family. Acts as a negative regulator in a variety of developmental processes including cell differentiation and proliferation controlled by the Ras/ERK pathway. Suppresses the photoreceptor cell differentiation and wing vein formation. Required for proper oogenesis and early embryogenesis. Functions autonomously in a subset of photoreceptor progenitor cells in eye imaginal disks. Also appears to be required in surrounding non-neuronal cells for ommatidial patterning and photoreceptor differentiation. Plays a role in the maintenance of epithelial integrity during tracheal development. In Drosophila melanogaster (Fruit fly), this protein is Dual specificity protein phosphatase Mpk3 (Mkp3).